Consider the following 389-residue polypeptide: MARSNFLFTSESVSEGHPDKVCDRISDAVVDLYLAADPFARVACETLTTTNKIVLAGEVRGPASITKEKVEETARNAVKAIGYEQEGFHWKNADVEVLLHAQSADIAQGVDAAGNKDEGAGDQGIMFGYACTETDVLMPSPIYYAHRILKRMAEDRHSGKRPEFEPDAKSQVTMKYENGKPVGVTSVVVSTQHKANVSQADLRELVRDAVKSVLPNGWFPPEEEFYVNPTGNFVIGGPDGDAGLTGRKIIVDTYGGWAPHGGGAFSGKDPTKVDRSAAYASRYLAKNVVAAGLSERCTIQLSYAIGVSKPLSIYCDLHGTGKVEEDAIEKAVAKCMDLSPRGIREHLQLNRPIYERTAAYGHFGRVPESDGGFSWEKTDLADKLKAEIR.

H17 is a binding site for ATP. Mg(2+) is bound at residue D19. E45 lines the K(+) pocket. Positions 58 and 102 each coordinate L-methionine. Residues 102 to 112 (QSADIAQGVDA) form a flexible loop region. ATP-binding positions include 167 to 169 (DAK), D241, 247 to 248 (RK), A264, and K268. D241 lines the L-methionine pocket. K272 contributes to the L-methionine binding site.

This sequence belongs to the AdoMet synthase family. As to quaternary structure, homotetramer; dimer of dimers. It depends on Mg(2+) as a cofactor. Requires K(+) as cofactor.

It is found in the cytoplasm. The enzyme catalyses L-methionine + ATP + H2O = S-adenosyl-L-methionine + phosphate + diphosphate. It functions in the pathway amino-acid biosynthesis; S-adenosyl-L-methionine biosynthesis; S-adenosyl-L-methionine from L-methionine: step 1/1. Catalyzes the formation of S-adenosylmethionine (AdoMet) from methionine and ATP. The overall synthetic reaction is composed of two sequential steps, AdoMet formation and the subsequent tripolyphosphate hydrolysis which occurs prior to release of AdoMet from the enzyme. The chain is S-adenosylmethionine synthase from Parvibaculum lavamentivorans (strain DS-1 / DSM 13023 / NCIMB 13966).